The primary structure comprises 74 residues: ATP synthase subunit c (74 aa).

The next 2 helical transmembrane spans lie at 8–28 and 52–72; these read FIGI…VSNI and IGAG…MLLI.

This sequence belongs to the ATPase C chain family. F-type ATPases have 2 components, F(1) - the catalytic core - and F(0) - the membrane proton channel. F(1) has five subunits: alpha(3), beta(3), gamma(1), delta(1), epsilon(1). F(0) has three main subunits: a(1), b(2) and c(10-14). The alpha and beta chains form an alternating ring which encloses part of the gamma chain. F(1) is attached to F(0) by a central stalk formed by the gamma and epsilon chains, while a peripheral stalk is formed by the delta and b chains.

It is found in the cell inner membrane. F(1)F(0) ATP synthase produces ATP from ADP in the presence of a proton or sodium gradient. F-type ATPases consist of two structural domains, F(1) containing the extramembraneous catalytic core and F(0) containing the membrane proton channel, linked together by a central stalk and a peripheral stalk. During catalysis, ATP synthesis in the catalytic domain of F(1) is coupled via a rotary mechanism of the central stalk subunits to proton translocation. Its function is as follows. Key component of the F(0) channel; it plays a direct role in translocation across the membrane. A homomeric c-ring of between 10-14 subunits forms the central stalk rotor element with the F(1) delta and epsilon subunits. The polypeptide is ATP synthase subunit c (Rickettsia felis (strain ATCC VR-1525 / URRWXCal2) (Rickettsia azadi)).